The sequence spans 501 residues: Aspartyl/glutamyl-tRNA(Asn/Gln) amidotransferase subunit B (501 aa).

Belongs to the GatB/GatE family. GatB subfamily. Heterotrimer of A, B and C subunits.

It carries out the reaction L-glutamyl-tRNA(Gln) + L-glutamine + ATP + H2O = L-glutaminyl-tRNA(Gln) + L-glutamate + ADP + phosphate + H(+). The catalysed reaction is L-aspartyl-tRNA(Asn) + L-glutamine + ATP + H2O = L-asparaginyl-tRNA(Asn) + L-glutamate + ADP + phosphate + 2 H(+). In terms of biological role, allows the formation of correctly charged Asn-tRNA(Asn) or Gln-tRNA(Gln) through the transamidation of misacylated Asp-tRNA(Asn) or Glu-tRNA(Gln) in organisms which lack either or both of asparaginyl-tRNA or glutaminyl-tRNA synthetases. The reaction takes place in the presence of glutamine and ATP through an activated phospho-Asp-tRNA(Asn) or phospho-Glu-tRNA(Gln). This is Aspartyl/glutamyl-tRNA(Asn/Gln) amidotransferase subunit B from Mycobacterium sp. (strain KMS).